Reading from the N-terminus, the 85-residue chain is NAD(P)H-quinone oxidoreductase subunit O (85 aa).

The protein belongs to the complex I NdhO subunit family. NDH-1 can be composed of about 15 different subunits; different subcomplexes with different compositions have been identified which probably have different functions.

Its subcellular location is the cellular thylakoid membrane. The enzyme catalyses a plastoquinone + NADH + (n+1) H(+)(in) = a plastoquinol + NAD(+) + n H(+)(out). The catalysed reaction is a plastoquinone + NADPH + (n+1) H(+)(in) = a plastoquinol + NADP(+) + n H(+)(out). Its function is as follows. NDH-1 shuttles electrons from an unknown electron donor, via FMN and iron-sulfur (Fe-S) centers, to quinones in the respiratory and/or the photosynthetic chain. The immediate electron acceptor for the enzyme in this species is believed to be plastoquinone. Couples the redox reaction to proton translocation, and thus conserves the redox energy in a proton gradient. Cyanobacterial NDH-1 also plays a role in inorganic carbon-concentration. The protein is NAD(P)H-quinone oxidoreductase subunit O of Synechococcus sp. (strain CC9311).